Here is a 306-residue protein sequence, read N- to C-terminus: Zinc finger protein 625 (306 aa).

The C2H2-type 1; degenerate zinc finger occupies 31–53 (PRVKSCGEVSVGHASLNRHHRAD). 8 C2H2-type zinc fingers span residues 69 to 91 (YKCTYCKKAFSDLPYFRTHEWAH), 97 to 119 (YDCEECGKSFISRSSIRRHRIMH), 125 to 147 (YKCNFCGKALMCLSLYLIHKRTH), 153 to 175 (YECKQCGKAFSHSGSLRIHERTH), 181 to 203 (YECSECGKAFHSSTCLHAHKITH), 209 to 231 (YECKQCGKAFVSFNSVRYHERTH), 237 to 259 (YECKQCGKAFRSASHLRTHGRTH), and 265 to 287 (YECKQCGKAFGCASSVKIHERTH). The residue at position 209 (Tyr209) is a Phosphotyrosine. Positions 287-306 (HTGEKPCSSNTSKGQGEKIA) are disordered.

The protein belongs to the krueppel C2H2-type zinc-finger protein family.

It is found in the nucleus. May be involved in transcriptional regulation. The chain is Zinc finger protein 625 (ZNF625) from Homo sapiens (Human).